A 1221-amino-acid polypeptide reads, in one-letter code: 2-oxoglutarate dehydrogenase E1/E2 component (1221 aa).

The tract at residues 2-40 (SSASTFGQNAWLVDEMFQQFQKDPKSVDKEWRELFEAQG) is 2-oxoglutarate dehydrogenase E1, N-terminal part. Positions 22–107 (QKDPKSVDKE…KLPEPGQTPI (86 aa)) are disordered. Residues 23 to 36 (KDPKSVDKEWRELF) are compositionally biased toward basic and acidic residues. A compositionally biased stretch (polar residues) spans 41-52 (GPNTTPATTEAQ). Positions 41 to 89 (GPNTTPATTEAQPSAPKESAKPAPKAAPAAKAAPRVETKPADKTAPKAK) are linker. Residues 53 to 73 (PSAPKESAKPAPKAAPAAKAA) are compositionally biased toward low complexity. Over residues 74–90 (PRVETKPADKTAPKAKE) the composition is skewed to basic and acidic residues. The tract at residues 90 to 337 (ESSVPQQPKL…LRTMSRLLTD (248 aa)) is succinyltransferase E2. The active-site Proton acceptor; for succinyltransferase activity is His316. Residues 338–1221 (DSFWDEIFDA…KQLIDEAFEA (884 aa)) are 2-oxoglutarate dehydrogenase E1, C-terminal part. Arg544 is a binding site for thiamine diphosphate. 2-oxoglutarate contacts are provided by His583 and Ser608. 6 residues coordinate thiamine diphosphate: Ser608, Leu610, Asp645, Ala646, Ala647, and Asn678. Residue Asp645 participates in Mg(2+) binding. Mg(2+) contacts are provided by Asn678 and Ile680. A 2-oxoglutarate-binding site is contributed by His1017. Residues Thr1035, Arg1051, Lys1087, Ser1090, and Arg1144 each coordinate acetyl-CoA.

This sequence in the N-terminal section; belongs to the alpha-ketoglutarate dehydrogenase family. The protein in the C-terminal section; belongs to the 2-oxoacid dehydrogenase family. As to quaternary structure, homodimer. Part of an unusual ODH/PDH supercomplex, consisting of AceE (E1), AceF (E2), and Lpd (E3) together with OdhA (E1+E2). Interacts with the FHA domain of unphosphorylated OdhI via its C-terminal dehydrogenase domain. It depends on Mg(2+) as a cofactor. Requires thiamine diphosphate as cofactor.

The catalysed reaction is N(6)-[(R)-lipoyl]-L-lysyl-[protein] + 2-oxoglutarate + H(+) = N(6)-[(R)-S(8)-succinyldihydrolipoyl]-L-lysyl-[protein] + CO2. It carries out the reaction N(6)-[(R)-dihydrolipoyl]-L-lysyl-[protein] + succinyl-CoA = N(6)-[(R)-S(8)-succinyldihydrolipoyl]-L-lysyl-[protein] + CoA. The protein operates within carbohydrate metabolism; tricarboxylic acid cycle; succinyl-CoA from 2-oxoglutarate (dehydrogenase route): step 1/1. With respect to regulation, inhibited by unphosphorylated OdhI, but not by phosphorylated OdhI. In terms of biological role, catalyzes the E1 and E2 reactions as part of 2-oxoglutarate dehydrogenase (ODH) activity, to convert 2-oxoglutarate to succinyl-CoA and CO(2). OdhA has reductase activity with 2-oxoglutarate but does not react with pyruvate, and also displays transsuccinylase but no transacetylase activity. Since OdhA is not lipoylated, the succinyltransferase activity of its E2 domain is dependent on lipoyl residues of the acetyltransferase AceF. The chain is 2-oxoglutarate dehydrogenase E1/E2 component from Corynebacterium glutamicum (strain ATCC 13032 / DSM 20300 / JCM 1318 / BCRC 11384 / CCUG 27702 / LMG 3730 / NBRC 12168 / NCIMB 10025 / NRRL B-2784 / 534).